A 441-amino-acid polypeptide reads, in one-letter code: Ribulose bisphosphate carboxylase large chain (441 aa).

K5 is subject to N6,N6,N6-trimethyllysine. T164 is a substrate binding site. Residue K166 is the Proton acceptor of the active site. K168 is a substrate binding site. Residues K192, D194, and E195 each coordinate Mg(2+). K192 is subject to N6-carboxylysine. The Proton acceptor role is filled by H285. Residues R286, H318, and S370 each contribute to the substrate site.

This sequence belongs to the RuBisCO large chain family. Type I subfamily. As to quaternary structure, heterohexadecamer of 8 large chains and 8 small chains; disulfide-linked. The disulfide link is formed within the large subunit homodimers. Requires Mg(2+) as cofactor. In terms of processing, the disulfide bond which can form in the large chain dimeric partners within the hexadecamer appears to be associated with oxidative stress and protein turnover.

The protein resides in the plastid. It localises to the chloroplast. It catalyses the reaction 2 (2R)-3-phosphoglycerate + 2 H(+) = D-ribulose 1,5-bisphosphate + CO2 + H2O. It carries out the reaction D-ribulose 1,5-bisphosphate + O2 = 2-phosphoglycolate + (2R)-3-phosphoglycerate + 2 H(+). Its function is as follows. RuBisCO catalyzes two reactions: the carboxylation of D-ribulose 1,5-bisphosphate, the primary event in carbon dioxide fixation, as well as the oxidative fragmentation of the pentose substrate in the photorespiration process. Both reactions occur simultaneously and in competition at the same active site. The sequence is that of Ribulose bisphosphate carboxylase large chain from Hemionitis engywookii (Fendler's false cloak fern).